The primary structure comprises 431 residues: Teosinte glume architecture 1 (431 aa).

Disordered regions lie at residues 18–55 (QDHA…GAPA) and 68–102 (ECEP…QQCP). The segment covering 21 to 41 (AAAAPSSGGHAANAAAAGTGT) has biased composition (low complexity). The SBP-type zinc-finger motif lies at 101-178 (CPSCAVDGCR…DGHNRRRRKP (78 aa)). 8 residues coordinate Zn(2+): C104, C109, C126, H129, C145, C148, H152, and C164. A compositionally biased stretch (gly residues) spans 408–419 (GGGSGGGEGSSD). Positions 408–431 (GGGSGGGEGSSDGGTSSSMPFSWQ) are disordered.

As to quaternary structure, monomer and homodimer. Strongly expressed in immature ears and weakly in husks. Found in the inflorescence meristem of the developing ear, in the spikelet pair primordia, the glume primordia, the cupule forming region and other floral organs. Not detected in other tissues.

Functionally, SBP transcriptional regulator probably involved in the domestication of maize. Acts as a transcriptional repressor binding to a 5'-GTAC-3' motif. May repress the growth of lateral branches in length and numbers. In Zea mays (Maize), this protein is Teosinte glume architecture 1.